A 204-amino-acid polypeptide reads, in one-letter code: Transcription initiation factor TFIID subunit 11b (204 aa).

Positions 38–60 (PFEAAMEEQEESPVETEQTLEGD) are disordered. The segment covering 42 to 58 (AMEEQEESPVETEQTLE) has biased composition (acidic residues). One can recognise a Histone-fold domain in the interval 106–195 (FTEEQMSRYE…RRLKLQGKVP (90 aa)).

This sequence belongs to the TAF11 family. As to quaternary structure, component of the TFIID complex. TFIID is composed of TATA binding protein (TBP) and a number of TBP-associated factors (TAFs) whose MWs range from 14-217 kDa. Expressed in roots, leaves and inflorescences.

Its subcellular location is the nucleus. Its function is as follows. TAFs are components of the transcription factor IID (TFIID) complex that is essential for mediating regulation of RNA polymerase transcription. This is Transcription initiation factor TFIID subunit 11b (TAF11B) from Arabidopsis thaliana (Mouse-ear cress).